The primary structure comprises 93 residues: Cobalt transport protein CbiN (93 aa).

A run of 2 helical transmembrane segments spans residues 5-25 (LMLL…NHGG) and 63-83 (LLFT…LGYC).

Belongs to the CbiN family. As to quaternary structure, forms an energy-coupling factor (ECF) transporter complex composed of an ATP-binding protein (A component, CbiO), a transmembrane protein (T component, CbiQ) and 2 possible substrate-capture proteins (S components, CbiM and CbiN) of unknown stoichimetry.

The protein localises to the cell inner membrane. The protein operates within cofactor biosynthesis; adenosylcobalamin biosynthesis. Its function is as follows. Part of the energy-coupling factor (ECF) transporter complex CbiMNOQ involved in cobalt import. In Salmonella agona (strain SL483), this protein is Cobalt transport protein CbiN.